We begin with the raw amino-acid sequence, 1085 residues long: Solute carrier family 12 member 4 (1085 aa).

Residues 1-119 (MPHFTVVPVD…RRAAKAPSMG (119 aa)) lie on the Cytoplasmic side of the membrane. Serine 24 carries the phosphoserine modification. Residues 28–46 (YGERAEREDPDGHGNHRES) are compositionally biased toward basic and acidic residues. Positions 28–47 (YGERAEREDPDGHGNHRESS) are disordered. Phosphoserine occurs at positions 47, 59, 81, and 88. The discontinuously helical transmembrane segment at 120–141 (TLMGVYLPCLQNIFGVILFLRL) threads the bilayer. 2 residues coordinate K(+): asparagine 131 and isoleucine 132. Residues 142-149 (TWMVGTAG) are Extracellular-facing. A helical membrane pass occupies residues 150 to 172 (VLQALLIVLICCCCTLLTAISMS). Residues 173–196 (AIATNGVVPAGGSYFMISRSLGPE) lie on the Cytoplasmic side of the membrane. The helical transmembrane segment at 197–225 (FGGAVGLCFYLGTTFAAAMYILGAIEILL) threads the bilayer. Tyrosine 216 is a binding site for K(+). Residues 226–248 (TYIAPPAAIFYPSGTHDTSNATL) are Extracellular-facing. Residue asparagine 245 is glycosylated (N-linked (GlcNAc...) asparagine). 2 helical membrane passes run 249 to 271 (NNMRVYGTVFLSFMTLVVFVGVK) and 272 to 297 (YVNKFASLFLACVIISILSIYAGGIK). Over 298–419 (SMFDPPVFPV…LYVVADIATS (122 aa)) the chain is Extracellular. Cysteine 308 and cysteine 323 are oxidised to a cystine. N-linked (GlcNAc...) asparagine glycans are attached at residues asparagine 312, asparagine 331, and asparagine 347. Cysteine 343 and cysteine 353 form a disulfide bridge. The chain crosses the membrane as a helical span at residues 420 to 440 (FTVLVGIFFPSVTGIMAGSNR). K(+) contacts are provided by proline 429 and threonine 432. Chloride contacts are provided by glycine 433, isoleucine 434, and methionine 435. The Cytoplasmic portion of the chain corresponds to 441-450 (SGDLRDAQKS). The chain crosses the membrane as a helical span at residues 451–473 (IPVGTILAIVTTSLVYFSSVVLF). Residues 474-504 (GACIEGVVLRDKYGDGVSRNLVVGTLAWPSP) are Extracellular-facing. The chain crosses the membrane as a helical span at residues 505 to 531 (WVIVVGSFFSTCGAGLQSLTGAPRLLQ). At 532 to 554 (AIAKDNIIPFLRVFGHGKANGEP) the chain is on the cytoplasmic side. The next 2 membrane-spanning stretches (helical) occupy residues 555–575 (TWALLLTALIAELGILIASLD) and 576–598 (MVAPILSMFFLMCYLFVNLACAV). Tyrosine 589 contributes to the chloride binding site. Residues 599-612 (QTLLRTPNWRPRFK) lie on the Cytoplasmic side of the membrane. A run of 2 helical transmembrane segments spans residues 613-635 (YYHWALSFLGMSLCLALMFVSSW) and 636-651 (YYALVAMLIAGMIYKY). Residues 652 to 1085 (IEYQGAEKEW…GGREVITIYS (434 aa)) lie on the Cytoplasmic side of the membrane. The scissor helix stretch occupies residues 665-681 (IRGLSLSAARYALLRLE). The ATP site is built by leucine 697, lysine 699, lysine 707, tyrosine 708, and valine 730. Serine 734 bears the Phosphoserine mark. 3 residues coordinate ATP: glycine 794, tryptophan 795, and tyrosine 797. Phosphoserine is present on residues serine 916 and serine 967. At threonine 983 the chain carries Phosphothreonine. Serine 1050 is subject to Phosphoserine.

Belongs to the SLC12A transporter family. K/Cl co-transporter subfamily. In terms of assembly, homodimer; adopts a domain-swap conformation at the scissor helices connecting the transmembrane domain and C-terminal domain. Heterodimer with other K-Cl cotransporters. N-glycosylated. In terms of processing, phosphorylated, phosphorylation may regulate transporter activity.

The protein localises to the cell membrane. It catalyses the reaction K(+)(in) + chloride(in) = K(+)(out) + chloride(out). Its activity is regulated as follows. Inhibited by WNK3. In terms of biological role, mediates electroneutral potassium-chloride cotransport when activated by cell swelling. May contribute to cell volume homeostasis in single cells. May be involved in the regulation of basolateral Cl(-) exit in NaCl absorbing epithelia. In Oryctolagus cuniculus (Rabbit), this protein is Solute carrier family 12 member 4 (SLC12A4).